The sequence spans 171 residues: Thioredoxin-2 (171 aa).

One can recognise a Thioredoxin domain in the interval 41–169 (AFNASPSTSQ…LQALISANHP (129 aa)). Cys-95 and Cys-98 are joined by a disulfide.

It belongs to the thioredoxin family.

It localises to the cytoplasm. It is found in the vacuole. Its function is as follows. Thioredoxin involved in responses to oxidative and cell wall stresses. Plays an important role in appressorium formation on hyphal tips. TRX2 may affect invasive growth via the MST11-MST7-PMK1 pathway since it is required for the proper folding or dimerization of MAPKK MST7. The polypeptide is Thioredoxin-2 (Pyricularia oryzae (strain 70-15 / ATCC MYA-4617 / FGSC 8958) (Rice blast fungus)).